The sequence spans 299 residues: MTNYQHELYFAHCHGHPKKPLEIYMFVDPLCPECWSLEPVIKKLKIRYGRFFTLRIIASASLTALNKKRKKHLLAEAWEKIASRSGMSCDGNVWFEQDQPLSSPYMAALAFKAAELQGRKAGMQFLRNMQESLFVSKKNITDENVLLEIAENTSLDLEEFKKDLHSQSAVKALQCDMKIAAEMDVSVNPTLTFFNTQHEDEGLKVPGSYSYDVYEEILFEMLGDEPKPSETPPLECFIEYFRFVASKEIALVYDLSLEEVEKEMKKLAFAKKVAKVEAKHGMFWKSLSTYSDEYQSCEK.

Belongs to the SpxH family. As to quaternary structure, interacts with Spx. Interacts with SpxO/YuzO.

It is found in the cytoplasm. Irreversible aggregation upon several stress conditions prevents interaction with Spx and therefore leads to Spx stabilization. Inhibited by interaction with SpxO/YuzO. Functionally, adapter protein required for efficient degradation of Spx by ClpXP under non-stress conditions. Interaction with Spx stabilizes Spx and exposes the C-terminus of Spx for recognition and proteolysis by ClpXP. Is specific for Spx and does not enhance proteolysis by ClpCP protease. Probably binds 2 zinc ions. This Bacillus subtilis (strain 168) protein is ClpXP adapter protein SpxH.